We begin with the raw amino-acid sequence, 412 residues long: 43 kDa receptor-associated protein of the synapse (412 aa).

Residue Gly-2 is the site of N-myristoyl glycine attachment. TPR repeat units lie at residues 6–39 (TKQQ…STEL), 83–116 (TEAY…EGGP), 123–156 (GQVC…AHGN), 163–196 (CRVC…VADY), 206–239 (AMSR…ALQH), 246–279 (ALCL…MTEI), and 286–319 (AHVL…ADAV). Tyr-196 carries the phosphotyrosine modification. An RING-type zinc finger spans residues 363–403 (CGLCGESIGDQNSQLQALPCSHLFHLKCLQTNGNRGCPNCK). Ser-405 carries the post-translational modification Phosphoserine.

Belongs to the RAPsyn family.

It is found in the cell membrane. It localises to the postsynaptic cell membrane. The protein localises to the cytoplasm. The protein resides in the cytoskeleton. Its function is as follows. Postsynaptic protein required for clustering of nicotinic acetylcholine receptors (nAChRs) at the neuromuscular junction. It may link the receptor to the underlying postsynaptic cytoskeleton, possibly by direct association with actin or spectrin. This is 43 kDa receptor-associated protein of the synapse (RAPSN) from Tetronarce californica (Pacific electric ray).